Here is a 110-residue protein sequence, read N- to C-terminus: Thiosulfate sulfurtransferase GlpE (110 aa).

In terms of domain architecture, Rhodanese spans 17-105 (RENGAQVVDI…WRSVYPADTS (89 aa)). The Cysteine persulfide intermediate role is filled by Cys-65.

The protein belongs to the GlpE family.

Its subcellular location is the cytoplasm. It catalyses the reaction thiosulfate + hydrogen cyanide = thiocyanate + sulfite + 2 H(+). The enzyme catalyses thiosulfate + [thioredoxin]-dithiol = [thioredoxin]-disulfide + hydrogen sulfide + sulfite + 2 H(+). Functionally, transferase that catalyzes the transfer of sulfur from thiosulfate to thiophilic acceptors such as cyanide or dithiols. May function in a CysM-independent thiosulfate assimilation pathway by catalyzing the conversion of thiosulfate to sulfite, which can then be used for L-cysteine biosynthesis. This chain is Thiosulfate sulfurtransferase GlpE, found in Pseudomonas paraeruginosa (strain DSM 24068 / PA7) (Pseudomonas aeruginosa (strain PA7)).